Reading from the N-terminus, the 292-residue chain is Protein/nucleic acid deglycase HchA (292 aa).

Residues 1–12 show a composition bias toward polar residues; that stretch reads MSQDVNELSKQP. The tract at residues 1-23 is disordered; the sequence is MSQDVNELSKQPTPDKAEDNAFF. The Nucleophile role is filled by C190.

Belongs to the peptidase C56 family. HchA subfamily.

The protein localises to the cytoplasm. The catalysed reaction is N(omega)-(1-hydroxy-2-oxopropyl)-L-arginyl-[protein] + H2O = lactate + L-arginyl-[protein] + H(+). The enzyme catalyses N(6)-(1-hydroxy-2-oxopropyl)-L-lysyl-[protein] + H2O = lactate + L-lysyl-[protein] + H(+). It carries out the reaction S-(1-hydroxy-2-oxopropyl)-L-cysteinyl-[protein] + H2O = lactate + L-cysteinyl-[protein] + H(+). It catalyses the reaction N(omega)-(1-hydroxy-2-oxoethyl)-L-arginyl-[protein] + H2O = L-arginyl-[protein] + glycolate + H(+). The catalysed reaction is N(6)-(1-hydroxy-2-oxoethyl)-L-lysyl-[protein] + H2O = glycolate + L-lysyl-[protein] + H(+). The enzyme catalyses S-(1-hydroxy-2-oxoethyl)-L-cysteinyl-[protein] + H2O = glycolate + L-cysteinyl-[protein] + H(+). It carries out the reaction N(2)-(1-hydroxy-2-oxopropyl)-dGTP + H2O = lactate + dGTP + H(+). It catalyses the reaction N(2)-(1-hydroxy-2-oxopropyl)-GTP + H2O = lactate + GTP + H(+). The catalysed reaction is N(2)-(1-hydroxy-2-oxopropyl)-GDP + H2O = lactate + GDP + H(+). The enzyme catalyses N(2)-(1-hydroxy-2-oxopropyl)-GMP + H2O = lactate + GMP + H(+). It carries out the reaction N(2)-(1-hydroxy-2-oxoethyl)-dGTP + H2O = dGTP + glycolate + H(+). It catalyses the reaction N(2)-(1-hydroxy-2-oxoethyl)-GTP + H2O = glycolate + GTP + H(+). The catalysed reaction is N(2)-(1-hydroxy-2-oxoethyl)-GDP + H2O = glycolate + GDP + H(+). The enzyme catalyses N(2)-(1-hydroxy-2-oxoethyl)-GMP + H2O = glycolate + GMP + H(+). It carries out the reaction an N(2)-(1-hydroxy-2-oxopropyl)-guanosine in RNA + H2O = a guanosine in RNA + lactate + H(+). It catalyses the reaction an N(2)-(1-hydroxy-2-oxopropyl)-2'-deoxyguanosine in DNA + H2O = a 2'-deoxyguanosine in DNA + lactate + H(+). The catalysed reaction is an N(2)-(1-hydroxy-2-oxoethyl)-guanosine in RNA + H2O = a guanosine in RNA + glycolate + H(+). The enzyme catalyses an N(2)-(1-hydroxy-2-oxoethyl)-2'-deoxyguanosine in DNA + H2O = a 2'-deoxyguanosine in DNA + glycolate + H(+). Protein and nucleotide deglycase that catalyzes the deglycation of the Maillard adducts formed between amino groups of proteins or nucleotides and reactive carbonyl groups of glyoxals. Thus, functions as a protein deglycase that repairs methylglyoxal- and glyoxal-glycated proteins, and releases repaired proteins and lactate or glycolate, respectively. Deglycates cysteine, arginine and lysine residues in proteins, and thus reactivates these proteins by reversing glycation by glyoxals. Acts on early glycation intermediates (hemithioacetals and aminocarbinols), preventing the formation of Schiff bases and advanced glycation endproducts (AGE). Also functions as a nucleotide deglycase able to repair glycated guanine in the free nucleotide pool (GTP, GDP, GMP, dGTP) and in DNA and RNA. Is thus involved in a major nucleotide repair system named guanine glycation repair (GG repair), dedicated to reversing methylglyoxal and glyoxal damage via nucleotide sanitization and direct nucleic acid repair. Plays an important role in protecting cells from carbonyl stress. In Staphylococcus aureus (strain Newman), this protein is Protein/nucleic acid deglycase HchA.